A 384-amino-acid polypeptide reads, in one-letter code: Class V chitinase CHIT5a (384 aa).

An N-terminal signal peptide occupies residues 1 to 27 (MAVQKIIITPILVFLVTIFFNVSSSSS). Asparagine 29, asparagine 114, and asparagine 133 each carry an N-linked (GlcNAc...) asparagine glycan. The 346-residue stretch at 39–384 (GVRSAYWPAG…SKQASNAWGH (346 aa)) folds into the GH18 domain. Glutamate 152 (proton donor) is an active-site residue. N-linked (GlcNAc...) asparagine glycans are attached at residues asparagine 195 and asparagine 234.

This sequence belongs to the glycosyl hydrolase 18 family. Chitinase class V subfamily.

It catalyses the reaction Random endo-hydrolysis of N-acetyl-beta-D-glucosaminide (1-&gt;4)-beta-linkages in chitin and chitodextrins.. Its pathway is glycan degradation; chitin degradation. In terms of biological role, possesses chitinase activity in vitro toward glycol chitin, carboxymethyl-chitin, colloidal chitin, and the chitin oligosaccharides (N-acetylglucosamine) (GlcNAc)6 and (GlcNAc)5. Hydrolyzes (GlcNAc)6 into (GlcNAc)4 and (GlcNAc)2, or two (GlcNAc)3 molecules. Has the capacity to inhibit hyphal growth of the fungus Trichoderma viride in an agar-plate bioassay. This Medicago truncatula (Barrel medic) protein is Class V chitinase CHIT5a.